Consider the following 777-residue polypeptide: DISP complex protein LRCH3 (777 aa).

10 LRR repeats span residues 56 to 79 (AAVTGVLSLSGRKLREFPRGAANH), 81 to 104 (LTDTTRADLSRNRLSEIPIEACHF), 105 to 127 (VSLENLNLYQNCIRYIPEAILNL), 128 to 150 (QALTFLNISRNQLSTLPVHLCNL), 152 to 172 (LKVLIASNNKLVSLPEEIGHL), 173 to 195 (RHLMELDVSCNEIQTIPSQIGNL), 196 to 218 (EALRDLNVRRNHLVHLPEELAEL), 220 to 239 (LIRLDFSCNKITTIPVCYRN), 240 to 264 (LRHLQTITLDNNPLQSPPAQICIKG), and 266 to 290 (VHIFKYLNIQACKIAPDLPDYDRRP). The tract at residues 56 to 290 (AAVTGVLSLS…PDLPDYDRRP (235 aa)) is mediates interaction with DOCK7. Phosphoserine is present on residues Ser-324, Ser-415, and Ser-419. The tract at residues 382 to 648 (TAEEEEAEVR…DSTDSITGQN (267 aa)) is mediates direct interaction with MYO6. The segment at 568–590 (FTPLKSDDRPNALLSSPATETVH) is disordered. 2 positions are modified to phosphoserine: Ser-611 and Ser-628. The tract at residues 621–653 (ETNKGHASPLPPSAAPTTDSTDSITGQNSRQRE) is disordered. The segment covering 635–645 (APTTDSTDSIT) has biased composition (low complexity). A Calponin-homology (CH) domain is found at 652–765 (REEELELIDQ…VTVQALLELA (114 aa)).

In terms of assembly, component of the DOCK7-induced septin displacement/DISP complex, at least composed of DOCK7, LRCH3 and MYO6.

It is found in the cytoplasm. Functionally, as part of the DISP complex, may regulate the association of septins with actin and thereby regulate the actin cytoskeleton. The protein is DISP complex protein LRCH3 of Homo sapiens (Human).